The following is a 262-amino-acid chain: Ribosomal RNA small subunit methyltransferase A (262 aa).

S-adenosyl-L-methionine-binding residues include His16, Leu18, Gly43, Glu64, Asp89, and Asn109.

The protein belongs to the class I-like SAM-binding methyltransferase superfamily. rRNA adenine N(6)-methyltransferase family. RsmA subfamily.

Its subcellular location is the cytoplasm. The catalysed reaction is adenosine(1518)/adenosine(1519) in 16S rRNA + 4 S-adenosyl-L-methionine = N(6)-dimethyladenosine(1518)/N(6)-dimethyladenosine(1519) in 16S rRNA + 4 S-adenosyl-L-homocysteine + 4 H(+). Its function is as follows. Specifically dimethylates two adjacent adenosines (A1518 and A1519) in the loop of a conserved hairpin near the 3'-end of 16S rRNA in the 30S particle. May play a critical role in biogenesis of 30S subunits. This Xanthomonas axonopodis pv. citri (strain 306) protein is Ribosomal RNA small subunit methyltransferase A.